Reading from the N-terminus, the 423-residue chain is MRNFLDKIGEEALVVEDEVSTSFEAASILREHPRDLVILKNLKESDIPVISGLCNTREKIALSLNCRVHEITHRIVEAMENPTPISSVGGLDGYRSGRADLSELPILRHYRRDGGPYITAGVIFARDPDTGVRNASIHRMMVIGDDRLAVRIVPRHLYTYLQKAEERGEDLEIAIAIGMDPATLLATTTSIPIDADEMEVANTFHEGELELVRCEGVDMEVPPAEIILEGRILCGVREREGPFVDLTDTYDVVRDEPVISLERMHIRKDAMYHAILPAGFEHRLLQGLPQEPRIYRAVKNTVPTVRNVVLTEGGCCWLHAAVSIKKQTEGDGKNVIMAALAAHPSLKHVVVVDEDIDVLDPEEIEYAIATRVKGDDDILIVPGARGSSLDPAALPDGTTTKVGVDATAPLASAEKFQRVSRSE.

Asn-134 and Glu-197 together coordinate Mn(2+). Asp-245 acts as the Proton acceptor in catalysis.

The protein belongs to the UbiD family. Prenylated FMN is required as a cofactor. It depends on Mn(2+) as a cofactor.

It carries out the reaction (2E)-3-methyl-5-phosphooxypent-2-enoate + H(+) = isopentenyl phosphate + CO2. The protein operates within isoprenoid biosynthesis; isopentenyl diphosphate biosynthesis via mevalonate pathway. Functionally, catalyzes the conversion of trans-anhydromevalonate 5-phosphate (tAHMP) into isopentenyl phosphate. Involved in the archaeal mevalonate (MVA) pathway, which provides fundamental precursors for isoprenoid biosynthesis, such as isopentenyl diphosphate (IPP) and dimethylallyl diphosphate (DMAPP). The sequence is that of Anhydromevalonate phosphate decarboxylase from Methanothermobacter thermautotrophicus (strain ATCC 29096 / DSM 1053 / JCM 10044 / NBRC 100330 / Delta H) (Methanobacterium thermoautotrophicum).